A 365-amino-acid chain; its full sequence is Chorismate synthase (365 aa).

R47 serves as a coordination point for NADP(+). Residues 124 to 126 (RAS), G287, 302 to 306 (KPTAT), and R328 each bind FMN.

Belongs to the chorismate synthase family. Homotetramer. Requires FMNH2 as cofactor.

It catalyses the reaction 5-O-(1-carboxyvinyl)-3-phosphoshikimate = chorismate + phosphate. The protein operates within metabolic intermediate biosynthesis; chorismate biosynthesis; chorismate from D-erythrose 4-phosphate and phosphoenolpyruvate: step 7/7. Catalyzes the anti-1,4-elimination of the C-3 phosphate and the C-6 proR hydrogen from 5-enolpyruvylshikimate-3-phosphate (EPSP) to yield chorismate, which is the branch point compound that serves as the starting substrate for the three terminal pathways of aromatic amino acid biosynthesis. This reaction introduces a second double bond into the aromatic ring system. The chain is Chorismate synthase from Prochlorococcus marinus (strain AS9601).